We begin with the raw amino-acid sequence, 356 residues long: tRNA-specific 2-thiouridylase MnmA 1 (356 aa).

Residues 8–15 (GMSGGVDS) and Met34 contribute to the ATP site. The active-site Nucleophile is the Cys103. An intrachain disulfide couples Cys103 to Cys199. An ATP-binding site is contributed by Gly127. The segment at 149–151 (KDQ) is interaction with tRNA. Residue Cys199 is the Cysteine persulfide intermediate of the active site. Residues 305–306 (RY) form an interaction with tRNA region.

Belongs to the MnmA/TRMU family.

Its subcellular location is the cytoplasm. It carries out the reaction S-sulfanyl-L-cysteinyl-[protein] + uridine(34) in tRNA + AH2 + ATP = 2-thiouridine(34) in tRNA + L-cysteinyl-[protein] + A + AMP + diphosphate + H(+). Catalyzes the 2-thiolation of uridine at the wobble position (U34) of tRNA, leading to the formation of s(2)U34. The sequence is that of tRNA-specific 2-thiouridylase MnmA 1 from Clostridium botulinum (strain Langeland / NCTC 10281 / Type F).